Reading from the N-terminus, the 149-residue chain is L-alanine exporter AlaE (149 aa).

The next 4 membrane-spanning stretches (helical) occupy residues 16–36, 46–66, 85–105, and 112–132; these read FAMV…LSGM, LVAI…RDAI, VLAY…TVGA, and AAVS…GYFL.

This sequence belongs to the AlaE exporter family.

It localises to the cell inner membrane. Its function is as follows. Exports L-alanine. This Citrobacter koseri (strain ATCC BAA-895 / CDC 4225-83 / SGSC4696) protein is L-alanine exporter AlaE.